The sequence spans 620 residues: 1-deoxy-D-xylulose-5-phosphate synthase (620 aa).

Residues H80 and 121–123 (GHS) each bind thiamine diphosphate. D152 contacts Mg(2+). Thiamine diphosphate contacts are provided by residues 153-154 (GA), N181, Y288, and E370. N181 serves as a coordination point for Mg(2+).

The protein belongs to the transketolase family. DXPS subfamily. Homodimer. Mg(2+) serves as cofactor. Thiamine diphosphate is required as a cofactor.

It catalyses the reaction D-glyceraldehyde 3-phosphate + pyruvate + H(+) = 1-deoxy-D-xylulose 5-phosphate + CO2. It participates in metabolic intermediate biosynthesis; 1-deoxy-D-xylulose 5-phosphate biosynthesis; 1-deoxy-D-xylulose 5-phosphate from D-glyceraldehyde 3-phosphate and pyruvate: step 1/1. Its function is as follows. Catalyzes the acyloin condensation reaction between C atoms 2 and 3 of pyruvate and glyceraldehyde 3-phosphate to yield 1-deoxy-D-xylulose-5-phosphate (DXP). This chain is 1-deoxy-D-xylulose-5-phosphate synthase, found in Klebsiella pneumoniae subsp. pneumoniae (strain ATCC 700721 / MGH 78578).